The following is a 230-amino-acid chain: Large ribosomal subunit protein uL1 (230 aa).

The protein belongs to the universal ribosomal protein uL1 family. Part of the 50S ribosomal subunit.

Its function is as follows. Binds directly to 23S rRNA. The L1 stalk is quite mobile in the ribosome, and is involved in E site tRNA release. Functionally, protein L1 is also a translational repressor protein, it controls the translation of the L11 operon by binding to its mRNA. The chain is Large ribosomal subunit protein uL1 from Bacillus mycoides (strain KBAB4) (Bacillus weihenstephanensis).